Here is a 190-residue protein sequence, read N- to C-terminus: Xanthine phosphoribosyltransferase 1 (190 aa).

Residues L20 and N27 each contribute to the xanthine site. 129–133 provides a ligand contact to 5-phospho-alpha-D-ribose 1-diphosphate; it reads AQGCA. Residue K157 coordinates xanthine.

Belongs to the purine/pyrimidine phosphoribosyltransferase family. Xpt subfamily. As to quaternary structure, homodimer.

The protein localises to the cytoplasm. It carries out the reaction XMP + diphosphate = xanthine + 5-phospho-alpha-D-ribose 1-diphosphate. Its pathway is purine metabolism; XMP biosynthesis via salvage pathway; XMP from xanthine: step 1/1. Its function is as follows. Converts the preformed base xanthine, a product of nucleic acid breakdown, to xanthosine 5'-monophosphate (XMP), so it can be reused for RNA or DNA synthesis. The sequence is that of Xanthine phosphoribosyltransferase 1 from Clostridium perfringens (strain ATCC 13124 / DSM 756 / JCM 1290 / NCIMB 6125 / NCTC 8237 / Type A).